A 115-amino-acid polypeptide reads, in one-letter code: Cell division topological specificity factor (115 aa).

A disordered region spans residues 89–115 (TGQIQLKEPKNQSEVDSPETEGKDQNS).

Belongs to the MinE family.

Prevents the cell division inhibition by proteins MinC and MinD at internal division sites while permitting inhibition at polar sites. This ensures cell division at the proper site by restricting the formation of a division septum at the midpoint of the long axis of the cell. The chain is Cell division topological specificity factor from Prochlorococcus marinus (strain NATL2A).